Here is a 119-residue protein sequence, read N- to C-terminus: Holo-[acyl-carrier-protein] synthase (119 aa).

Residues Asp-8 and Glu-58 each contribute to the Mg(2+) site.

Belongs to the P-Pant transferase superfamily. AcpS family. It depends on Mg(2+) as a cofactor.

It localises to the cytoplasm. The catalysed reaction is apo-[ACP] + CoA = holo-[ACP] + adenosine 3',5'-bisphosphate + H(+). In terms of biological role, transfers the 4'-phosphopantetheine moiety from coenzyme A to a Ser of acyl-carrier-protein. The chain is Holo-[acyl-carrier-protein] synthase from Lactobacillus johnsonii (strain CNCM I-12250 / La1 / NCC 533).